A 298-amino-acid polypeptide reads, in one-letter code: Homoserine kinase (298 aa).

Residue 83–93 (PVSRGLGSSST) participates in ATP binding.

Belongs to the GHMP kinase family. Homoserine kinase subfamily.

Its subcellular location is the cytoplasm. The catalysed reaction is L-homoserine + ATP = O-phospho-L-homoserine + ADP + H(+). The protein operates within amino-acid biosynthesis; L-threonine biosynthesis; L-threonine from L-aspartate: step 4/5. Catalyzes the ATP-dependent phosphorylation of L-homoserine to L-homoserine phosphate. This is Homoserine kinase from Clostridium beijerinckii (strain ATCC 51743 / NCIMB 8052) (Clostridium acetobutylicum).